The following is a 513-amino-acid chain: 2,3-bisphosphoglycerate-independent phosphoglycerate mutase (513 aa).

Mn(2+) is bound by residues aspartate 13 and serine 63. Catalysis depends on serine 63, which acts as the Phosphoserine intermediate. Substrate-binding positions include histidine 124, 154 to 155, arginine 186, arginine 192, 262 to 265, and lysine 335; these read RD and RADR. Residues aspartate 402, histidine 406, aspartate 443, histidine 444, and histidine 462 each coordinate Mn(2+).

Belongs to the BPG-independent phosphoglycerate mutase family. In terms of assembly, monomer. Requires Mn(2+) as cofactor.

The catalysed reaction is (2R)-2-phosphoglycerate = (2R)-3-phosphoglycerate. Its pathway is carbohydrate degradation; glycolysis; pyruvate from D-glyceraldehyde 3-phosphate: step 3/5. In terms of biological role, catalyzes the interconversion of 2-phosphoglycerate and 3-phosphoglycerate. This is 2,3-bisphosphoglycerate-independent phosphoglycerate mutase from Photobacterium profundum (strain SS9).